Consider the following 507-residue polypeptide: Maturase K (507 aa).

The protein belongs to the intron maturase 2 family. MatK subfamily.

The protein localises to the plastid. It is found in the chloroplast. In terms of biological role, usually encoded in the trnK tRNA gene intron. Probably assists in splicing its own and other chloroplast group II introns. This Kalmia procumbens (Alpine azalea) protein is Maturase K.